Here is a 278-residue protein sequence, read N- to C-terminus: Gap junction delta-3 protein (278 aa).

The Cytoplasmic segment spans residues 1–24; sequence MGEWAFLGSLLDAVQLQSPLVGRL. A helical membrane pass occupies residues 25-45; the sequence is WLVIMLIFRILVLATVGGAVF. At 46 to 76 the chain is on the extracellular side; sequence EDEQEEFVCNTLQPGCRQTCYDRAFPVSHYR. Residues 77–97 traverse the membrane as a helical segment; that stretch reads FWLFHILLLSAPPVLFVIYSM. Topologically, residues 98 to 136 are cytoplasmic; the sequence is HQASKEAGGAQLAPPCARGRAEAPCSPCALRARRARRCY. A helical membrane pass occupies residues 137–157; the sequence is LLSVALRLLAELAFLGGQALL. The Extracellular portion of the chain corresponds to 158–188; sequence YGFRVDPHYACAGPPCPHTVDCFVSRPTEKT. Residues 189 to 209 form a helical membrane-spanning segment; the sequence is VFVVFYFAVGLLSALLSVAEL. Residues 210–278 lie on the Cytoplasmic side of the membrane; sequence GHLLWKGRQR…LATVRQDLAI (69 aa). Positions 223-278 are disordered; it reads LPPPPPSPSLPSQRGDPDPFGPPAYAHRSPAGDSEGEGGSGHSKASLATVRQDLAI.

The protein belongs to the connexin family. Delta-type subfamily. As to quaternary structure, a connexon is composed of a hexamer of connexins.

The protein localises to the cell membrane. Its subcellular location is the cell junction. The protein resides in the gap junction. In terms of biological role, one gap junction consists of a cluster of closely packed pairs of transmembrane channels, the connexons, through which materials of low MW diffuse from one cell to a neighboring cell. This is Gap junction delta-3 protein (Gjd3) from Mus musculus (Mouse).